The chain runs to 218 residues: Small ribosomal subunit protein uS3 (218 aa).

The KH type-2 domain occupies 38-106; that stretch reads LRNDLKKKLM…PVHLNIEEVK (69 aa).

This sequence belongs to the universal ribosomal protein uS3 family. As to quaternary structure, part of the 30S ribosomal subunit. Forms a tight complex with proteins S10 and S14.

Binds the lower part of the 30S subunit head. Binds mRNA in the 70S ribosome, positioning it for translation. The protein is Small ribosomal subunit protein uS3 of Legionella pneumophila (strain Paris).